Reading from the N-terminus, the 422-residue chain is G-protein coupled receptor 151 protein (422 aa).

Over 1 to 45 (MGKAMLRAGFADTNSSNMNESFARLHFAGGYLPSDSKDWRTIIPS) the chain is Extracellular. 2 N-linked (GlcNAc...) asparagine glycosylation sites follow: Asn-14 and Asn-19. A helical transmembrane segment spans residues 46-66 (LLMAVCLVGLVGNLCVIGILL). Residues 67–76 (HGVWKRKPST) lie on the Cytoplasmic side of the membrane. A helical transmembrane segment spans residues 77–97 (IHSLILNLSLADFSLLLFSAP). The Extracellular segment spans residues 98 to 123 (VRAAAYSKGVWDLGWFICKSSDWFTH). A disulfide bridge links Cys-115 with Cys-191. A helical membrane pass occupies residues 124–144 (VCMAAKSLTFVVVAKACFAYA). The Cytoplasmic segment spans residues 145 to 157 (SDPAKQESIHSRT). A helical membrane pass occupies residues 158-178 (IWSVLAGIWVVASLLPLPEWL). Topologically, residues 179 to 205 (FSTTRRHAGVEMCLVDVPAVAEEFMSM) are extracellular. A helical membrane pass occupies residues 206–226 (FGKLYPLLVFCLPLLLAGVYF). Residues 227 to 259 (WRAYDQCKTRCTKTRNLRDQMRSKQLTVMLLST) lie on the Cytoplasmic side of the membrane. The chain crosses the membrane as a helical span at residues 260–280 (AIISALLWLPEWIAWLWVWHV). Residues 281–290 (KAGGPMPPQG) are Extracellular-facing. The helical transmembrane segment at 291 to 311 (FIALSQVLMFFTSTANPLIFL) threads the bilayer. The Cytoplasmic portion of the chain corresponds to 312–422 (VMSEEFKAGL…HEGQETEGCN (111 aa)). Residues 339–422 (VQEAPAGNTE…HEGQETEGCN (84 aa)) form a disordered region. The span at 366–380 (TDGRGSPDDSKEKSG) shows a compositional bias: basic and acidic residues.

In terms of tissue distribution, high expression in the brain and lower levels in kidney and liver. In the nervous system expressed specifically in the habenular area (at protein level).

Its subcellular location is the cell membrane. In terms of biological role, proton-sensing G-protein coupled receptor. The sequence is that of G-protein coupled receptor 151 protein (Gpr151) from Mus musculus (Mouse).